Consider the following 176-residue polypeptide: MLIHRIEIVFTSSRDAPLRVRTFLNELTYVFPNSIKINRGRQSLKDIIAKSIYLNSKYLVIIDVIKGNPGRFRVYDLTSKMLKYNFIIYGVTLLTELKLHRTLIKRGCIGKIEDQKIKNMLIDLGYIYIENCDVYANGDYIIKDNNYVFELKFTKDDKILGPVIRFQLYDRNKNIN.

Positions 6-176 constitute a Brix domain; it reads IEIVFTSSRD…QLYDRNKNIN (171 aa).

In terms of biological role, probably involved in the biogenesis of the ribosome. The chain is Probable Brix domain-containing ribosomal biogenesis protein from Sulfurisphaera tokodaii (strain DSM 16993 / JCM 10545 / NBRC 100140 / 7) (Sulfolobus tokodaii).